The sequence spans 525 residues: Light-independent protochlorophyllide reductase subunit B (525 aa).

Asp36 is a binding site for [4Fe-4S] cluster. Asp286 (proton donor) is an active-site residue. 421–422 (GL) lines the substrate pocket.

Belongs to the ChlB/BchB/BchZ family. In terms of assembly, protochlorophyllide reductase is composed of three subunits; ChlL, ChlN and ChlB. Forms a heterotetramer of two ChlB and two ChlN subunits. [4Fe-4S] cluster serves as cofactor.

The catalysed reaction is chlorophyllide a + oxidized 2[4Fe-4S]-[ferredoxin] + 2 ADP + 2 phosphate = protochlorophyllide a + reduced 2[4Fe-4S]-[ferredoxin] + 2 ATP + 2 H2O. Its pathway is porphyrin-containing compound metabolism; chlorophyll biosynthesis (light-independent). Functionally, component of the dark-operative protochlorophyllide reductase (DPOR) that uses Mg-ATP and reduced ferredoxin to reduce ring D of protochlorophyllide (Pchlide) to form chlorophyllide a (Chlide). This reaction is light-independent. The NB-protein (ChlN-ChlB) is the catalytic component of the complex. The polypeptide is Light-independent protochlorophyllide reductase subunit B (Prochlorococcus marinus (strain NATL1A)).